A 47-amino-acid polypeptide reads, in one-letter code: Conotoxin reg3.11 (47 aa).

A propeptide spanning residues 1-31 is cleaved from the precursor; it reads DQPVERHAENKRHLIPAVMRAMTMNADRRVQ. 3 disulfides stabilise this stretch: cysteine 32–cysteine 44, cysteine 33–cysteine 42, and cysteine 38–cysteine 45. A propeptide spanning residues 46-47 is cleaved from the precursor; sequence YH.

The protein belongs to the conotoxin M superfamily. As to expression, expressed by the venom duct.

The protein localises to the secreted. The chain is Conotoxin reg3.11 from Conus regius (Crown cone).